The sequence spans 231 residues: uncharacterized protein (231 aa).

A signal peptide spans 1–17 (MFGKILTTSLLIAMTFA). The interval 197–231 (KARKQQKNEGDDEETEDEQKIGSAIDGWVERQAKL) is disordered.

This is an uncharacterized protein from Caenorhabditis elegans.